The sequence spans 85 residues: Small ribosomal subunit protein uS17 (85 aa).

It belongs to the universal ribosomal protein uS17 family. As to quaternary structure, part of the 30S ribosomal subunit.

Its function is as follows. One of the primary rRNA binding proteins, it binds specifically to the 5'-end of 16S ribosomal RNA. The sequence is that of Small ribosomal subunit protein uS17 from Acetivibrio thermocellus (strain ATCC 27405 / DSM 1237 / JCM 9322 / NBRC 103400 / NCIMB 10682 / NRRL B-4536 / VPI 7372) (Clostridium thermocellum).